A 589-amino-acid polypeptide reads, in one-letter code: Class I diterpene synthase 2, chloroplastic (589 aa).

Positions 328, 332, 472, 476, and 480 each coordinate Mg(2+). Residues 328 to 332 (DDFFD) carry the DDXXD motif motif.

The protein belongs to the terpene synthase family. Requires Mg(2+) as cofactor. In terms of tissue distribution, mostly expressed in trichomes of leaves and fruits.

It localises to the plastid. The protein localises to the chloroplast. The enzyme catalyses 9alpha-copalyl diphosphate + H2O = (13S)-vitexifolin A + diphosphate. The catalysed reaction is peregrinol diphosphate = (13R)-9,13-epoxylabd-14-ene + diphosphate. It catalyses the reaction peregrinol diphosphate + H2O = viteagnusin D + diphosphate. Its pathway is secondary metabolite biosynthesis; terpenoid biosynthesis. Involved in the biosynthesis of labdane-type diterpenoid including cleroda-dienols, and peregrinol lactones and furan derivatives, dopaminergic diterpenoids that can bind to dopamine receptors in the human pituitary gland, have probably ability to lower prolactin levels, and are used to treat menstrual cycle disorders (e.g. premenstrual syndrome and mastodynia). Terpene synthase the catalyzes the conversion of peregrinol diphosphate to viteagnusin D and 9,13(R)-epoxy-labd-14-ene, and of syn-copalyl diphosophate to vitexifolin A. This Vitex agnus-castus (Chaste tree) protein is Class I diterpene synthase 2, chloroplastic.